The chain runs to 507 residues: Maturase K (507 aa).

The protein belongs to the intron maturase 2 family. MatK subfamily.

Its subcellular location is the plastid. It localises to the chloroplast. Its function is as follows. Usually encoded in the trnK tRNA gene intron. Probably assists in splicing its own and other chloroplast group II introns. The sequence is that of Maturase K from Ranunculus repens (Creeping buttercup).